Here is a 552-residue protein sequence, read N- to C-terminus: Chaperonin GroEL (552 aa).

Residues 30–33, K51, 87–91, G415, 479–481, and D495 contribute to the ATP site; these read TLGP, DGTTT, and NAA.

This sequence belongs to the chaperonin (HSP60) family. In terms of assembly, forms a cylinder of 14 subunits composed of two heptameric rings stacked back-to-back. Interacts with the co-chaperonin GroES.

The protein resides in the cytoplasm. The enzyme catalyses ATP + H2O + a folded polypeptide = ADP + phosphate + an unfolded polypeptide.. In terms of biological role, together with its co-chaperonin GroES, plays an essential role in assisting protein folding. The GroEL-GroES system forms a nano-cage that allows encapsulation of the non-native substrate proteins and provides a physical environment optimized to promote and accelerate protein folding. This is Chaperonin GroEL from Nitrosospira multiformis (strain ATCC 25196 / NCIMB 11849 / C 71).